Here is a 1165-residue protein sequence, read N- to C-terminus: Error-prone DNA polymerase (1165 aa).

Residues 1111 to 1165 (SEGLARPPLPTGADLYEPLTYEPLNGDRRDNPDAPAQRLRHPRDVRILPPSRDFH) are disordered. The span at 1152-1165 (PRDVRILPPSRDFH) shows a compositional bias: basic and acidic residues.

This sequence belongs to the DNA polymerase type-C family. DnaE2 subfamily.

The protein resides in the cytoplasm. The catalysed reaction is DNA(n) + a 2'-deoxyribonucleoside 5'-triphosphate = DNA(n+1) + diphosphate. DNA polymerase involved in damage-induced mutagenesis and translesion synthesis (TLS). It is not the major replicative DNA polymerase. This is Error-prone DNA polymerase from Rhodopseudomonas palustris (strain HaA2).